The primary structure comprises 223 residues: Flagellar L-ring protein (223 aa).

The signal sequence occupies residues 1–18 (MKKSLMALIVVGSFLLSA). Cys19 is lipidated: N-palmitoyl cysteine. A lipid anchor (S-diacylglycerol cysteine) is attached at Cys19.

This sequence belongs to the FlgH family. The basal body constitutes a major portion of the flagellar organelle and consists of four rings (L,P,S, and M) mounted on a central rod.

It is found in the cell outer membrane. It localises to the bacterial flagellum basal body. Its function is as follows. Assembles around the rod to form the L-ring and probably protects the motor/basal body from shearing forces during rotation. In Herminiimonas arsenicoxydans, this protein is Flagellar L-ring protein.